The sequence spans 264 residues: Thymidylate synthase (264 aa).

Residue Arg-21 participates in dUMP binding. A (6R)-5,10-methylene-5,6,7,8-tetrahydrofolate-binding site is contributed by His-51. 126–127 provides a ligand contact to dUMP; sequence RR. Cys-146 acts as the Nucleophile in catalysis. Residues 166–169, Asn-177, and 207–209 each bind dUMP; these read RSCD and HLY. Asp-169 is a (6R)-5,10-methylene-5,6,7,8-tetrahydrofolate binding site. Residue Ala-263 participates in (6R)-5,10-methylene-5,6,7,8-tetrahydrofolate binding.

The protein belongs to the thymidylate synthase family. Bacterial-type ThyA subfamily. In terms of assembly, homodimer.

It localises to the cytoplasm. The catalysed reaction is dUMP + (6R)-5,10-methylene-5,6,7,8-tetrahydrofolate = 7,8-dihydrofolate + dTMP. It participates in pyrimidine metabolism; dTTP biosynthesis. In terms of biological role, catalyzes the reductive methylation of 2'-deoxyuridine-5'-monophosphate (dUMP) to 2'-deoxythymidine-5'-monophosphate (dTMP) while utilizing 5,10-methylenetetrahydrofolate (mTHF) as the methyl donor and reductant in the reaction, yielding dihydrofolate (DHF) as a by-product. This enzymatic reaction provides an intracellular de novo source of dTMP, an essential precursor for DNA biosynthesis. The chain is Thymidylate synthase from Shigella flexneri serotype 5b (strain 8401).